Here is a 183-residue protein sequence, read N- to C-terminus: Hypoxanthine/guanine phosphoribosyltransferase (183 aa).

This sequence belongs to the purine/pyrimidine phosphoribosyltransferase family. Archaeal HPRT subfamily. In terms of assembly, homodimer.

The protein localises to the cytoplasm. It carries out the reaction IMP + diphosphate = hypoxanthine + 5-phospho-alpha-D-ribose 1-diphosphate. The enzyme catalyses GMP + diphosphate = guanine + 5-phospho-alpha-D-ribose 1-diphosphate. The protein operates within purine metabolism; IMP biosynthesis via salvage pathway; IMP from hypoxanthine: step 1/1. Catalyzes a salvage reaction resulting in the formation of IMP that is energically less costly than de novo synthesis. This Methanocaldococcus vulcanius (strain ATCC 700851 / DSM 12094 / M7) (Methanococcus vulcanius) protein is Hypoxanthine/guanine phosphoribosyltransferase.